The chain runs to 311 residues: MALPILLDCDPGHDDAIAIVLALASPELDVKAITSSAGNQTPEKTLRNVLRMLTLLNRTDIPVAGGAVKPLMRELIIADNVHGESGLDGPALPEPAFAPQNCTAVELMAKTLRESAEPVTIVSTGPQTNVALLLNSHPELHSKIARIVIMGGAMGLGNWTPAAEFNIYVDPEAAEIVFQSGIPVVMAGLDVTHKAQIHVEDTERFRAIGNPVSTIVAELLDFFLEYHKDEKWGFVGAPLHDPCTIAWLLKPELFTTVERWVGVETQGKYTQGMTVVDYYYLTGNKPNATVMVDVDRQGFVDLLADRLKFYA.

H240 is a catalytic residue.

This sequence belongs to the IUNH family. RihA subfamily.

In terms of biological role, hydrolyzes with equal efficiency cytidine or uridine to ribose and cytosine or uracil, respectively. This is Pyrimidine-specific ribonucleoside hydrolase RihA from Escherichia coli O139:H28 (strain E24377A / ETEC).